The following is a 554-amino-acid chain: Valerianol synthase TPS1E (554 aa).

Mg(2+) contacts are provided by D307 and D311. The DDXXD motif motif lies at 326 to 330 (VQRWD). Residues D452, S456, and E460 each contribute to the Mg(2+) site.

The protein belongs to the terpene synthase family. It depends on Mg(2+) as a cofactor.

It carries out the reaction (2E,6E)-farnesyl diphosphate + H2O = valerianol + diphosphate. It participates in secondary metabolite biosynthesis; terpenoid biosynthesis. Terpene synthase that catalyzes the biosynthesis of the terpene valerianol, which is a volatile compound of floral scent. The protein is Valerianol synthase TPS1E of Camellia hiemalis (Camellia).